The following is a 271-amino-acid chain: Phosphate import ATP-binding protein PstB (271 aa).

Residues V13–I266 enclose the ABC transporter domain. G57–S64 is a binding site for ATP.

This sequence belongs to the ABC transporter superfamily. Phosphate importer (TC 3.A.1.7) family. As to quaternary structure, the complex is composed of two ATP-binding proteins (PstB), two transmembrane proteins (PstC and PstA) and a solute-binding protein (PstS).

The protein localises to the cell inner membrane. The enzyme catalyses phosphate(out) + ATP + H2O = ADP + 2 phosphate(in) + H(+). In terms of biological role, part of the ABC transporter complex PstSACB involved in phosphate import. Responsible for energy coupling to the transport system. In Thermus thermophilus (strain ATCC 27634 / DSM 579 / HB8), this protein is Phosphate import ATP-binding protein PstB.